The primary structure comprises 87 residues: Cell division topological specificity factor (87 aa).

The protein belongs to the MinE family.

Prevents the cell division inhibition by proteins MinC and MinD at internal division sites while permitting inhibition at polar sites. This ensures cell division at the proper site by restricting the formation of a division septum at the midpoint of the long axis of the cell. The polypeptide is Cell division topological specificity factor (Herpetosiphon aurantiacus (strain ATCC 23779 / DSM 785 / 114-95)).